Here is a 162-residue protein sequence, read N- to C-terminus: Peptidyl-prolyl cis-trans isomerase-like 1 (162 aa).

The PPIase cyclophilin-type domain occupies Met-1 to Val-155.

This sequence belongs to the cyclophilin-type PPIase family. PPIL1 subfamily.

The catalysed reaction is [protein]-peptidylproline (omega=180) = [protein]-peptidylproline (omega=0). In terms of biological role, PPIases accelerate the folding of proteins. It catalyzes the cis-trans isomerization of proline imidic peptide bonds in oligopeptides. In Gibberella zeae (strain ATCC MYA-4620 / CBS 123657 / FGSC 9075 / NRRL 31084 / PH-1) (Wheat head blight fungus), this protein is Peptidyl-prolyl cis-trans isomerase-like 1 (CYP1).